The chain runs to 428 residues: Tubby-like F-box protein 5 (428 aa).

A disordered region spans residues 17-65 (IGSMSRRAADGRAGGGRGGSRHSWPVLWSEQQQPPQQQQLQRQEHQQQQ). Residues 47–65 (QQQPPQQQQLQRQEHQQQQ) show a composition bias toward low complexity. The F-box domain maps to 65-117 (QGRWANLPPELLLDVIQRVEASEATWPARRQVVACAAVCRSWREVTKEVVKTL).

The protein belongs to the TUB family. Ubiquitous.

This Oryza sativa subsp. japonica (Rice) protein is Tubby-like F-box protein 5 (TULP5).